The primary structure comprises 371 residues: Anhydro-N-acetylmuramic acid kinase (371 aa).

ATP is bound at residue 15–22 (GTSLDGVD).

The protein belongs to the anhydro-N-acetylmuramic acid kinase family.

It catalyses the reaction 1,6-anhydro-N-acetyl-beta-muramate + ATP + H2O = N-acetyl-D-muramate 6-phosphate + ADP + H(+). It participates in amino-sugar metabolism; 1,6-anhydro-N-acetylmuramate degradation. Its pathway is cell wall biogenesis; peptidoglycan recycling. Its function is as follows. Catalyzes the specific phosphorylation of 1,6-anhydro-N-acetylmuramic acid (anhMurNAc) with the simultaneous cleavage of the 1,6-anhydro ring, generating MurNAc-6-P. Is required for the utilization of anhMurNAc either imported from the medium or derived from its own cell wall murein, and thus plays a role in cell wall recycling. The sequence is that of Anhydro-N-acetylmuramic acid kinase from Cereibacter sphaeroides (strain ATCC 17023 / DSM 158 / JCM 6121 / CCUG 31486 / LMG 2827 / NBRC 12203 / NCIMB 8253 / ATH 2.4.1.) (Rhodobacter sphaeroides).